A 775-amino-acid chain; its full sequence is Chondroitin sulfate synthase 2 (775 aa).

Over 1–15 (MRASLLLSVLRPAGP) the chain is Cytoplasmic. The chain crosses the membrane as a helical; Signal-anchor for type II membrane protein span at residues 16–34 (VAVGISLGFTLSLLSVTWV). Residues 35-775 (EEPCGPGPPQ…LFEQEQGNST (741 aa)) lie on the Lumenal side of the membrane. The segment at 37 to 100 (PCGPGPPQPG…YHPAQPGQAA (64 aa)) is disordered. Polar residues predominate over residues 54 to 66 (GNTNAARRPNSVQ). N-linked (GlcNAc...) asparagine glycosylation is found at N138 and N361. D617 lines the a divalent metal cation pocket.

The protein belongs to the chondroitin N-acetylgalactosaminyltransferase family. As to quaternary structure, interacts with PRKN. It depends on Mn(2+) as a cofactor. Co(2+) serves as cofactor. Ubiquitous. Highly expressed in pancreas, ovary, brain, heart, skeletal muscle, colon, kidney, liver, stomach, spleen and placenta. As to expression, expressed in brain, spleen, ovary, testis, lung and peripheral mononuclear cells. In terms of tissue distribution, also ubiquitous.

It localises to the golgi apparatus. It is found in the golgi stack membrane. The protein localises to the cytoplasm. Its subcellular location is the cytosol. The protein resides in the mitochondrion. It localises to the mitochondrion matrix. It carries out the reaction 3-O-(beta-D-GlcA-(1-&gt;3)-beta-D-GalNAc-(1-&gt;4)-beta-D-GlcA-(1-&gt;3)-beta-D-Gal-(1-&gt;3)-beta-D-Gal-(1-&gt;4)-beta-D-Xyl)-L-seryl-[protein] + UDP-N-acetyl-alpha-D-galactosamine = 3-O-(beta-D-GalNAc-(1-&gt;4)-beta-D-GlcA-(1-&gt;3)-beta-D-GalNAc-(1-&gt;4)-beta-D-GlcA-(1-&gt;3)-beta-D-Gal-(1-&gt;3)-beta-D-Gal-(1-&gt;4)-beta-D-Xyl)-L-seryl-[protein] + UDP + H(+). The enzyme catalyses 3-O-{beta-D-GlcA-(1-&gt;3)-[beta-D-GalNAc-(1-&gt;4)-beta-D-GlcA-(1-&gt;3)](n)-beta-D-GalNAc-(1-&gt;4)-beta-D-GlcA-(1-&gt;3)-beta-D-Gal-(1-&gt;3)-beta-D-Gal-(1-&gt;4)-beta-D-Xyl}-L-seryl-[protein] + UDP-N-acetyl-alpha-D-galactosamine = 3-O-{[beta-D-GalNAc-(1-&gt;4)-beta-D-GlcA-(1-&gt;3)](n+1)-beta-D-GalNAc-(1-&gt;4)-beta-D-GlcA-(1-&gt;3)-beta-D-Gal-(1-&gt;3)-beta-D-Gal-(1-&gt;4)-beta-D-Xyl}-L-seryl-[protein] + UDP + H(+). The catalysed reaction is 3-O-(beta-D-GalNAc-(1-&gt;4)-beta-D-GlcA-(1-&gt;3)-beta-D-Gal-(1-&gt;3)-beta-D-Gal-(1-&gt;4)-beta-D-Xyl)-L-seryl-[protein] + UDP-alpha-D-glucuronate = 3-O-(beta-D-GlcA-(1-&gt;3)-beta-D-GalNAc-(1-&gt;4)-beta-D-GlcA-(1-&gt;3)-beta-D-Gal-(1-&gt;3)-beta-D-Gal-(1-&gt;4)-beta-D-Xyl)-L-seryl-[protein] + UDP + H(+). It catalyses the reaction 3-O-{[beta-D-GalNAc-(1-&gt;4)-beta-D-GlcA-(1-&gt;3)](n)-beta-D-GalNAc-(1-&gt;4)-beta-D-GlcA-(1-&gt;3)-beta-D-Gal-(1-&gt;3)-beta-D-Gal-(1-&gt;4)-beta-D-Xyl}-L-seryl-[protein] + UDP-alpha-D-glucuronate = 3-O-{beta-D-GlcA-(1-&gt;3)-[beta-D-GalNAc-(1-&gt;4)-beta-D-GlcA-(1-&gt;3)](n)-beta-D-GalNAc-(1-&gt;4)-beta-D-GlcA-(1-&gt;3)-beta-D-Gal-(1-&gt;3)-beta-D-Gal-(1-&gt;4)-beta-D-Xyl}-L-seryl-[protein] + UDP + H(+). In terms of biological role, has both beta-1,3-glucuronic acid and beta-1,4-N-acetylgalactosamine transferase activity. Transfers glucuronic acid (GlcUA) from UDP-GlcUA and N-acetylgalactosamine (GalNAc) from UDP-GalNAc to the non-reducing end of the elongating chondroitin polymer. Seems to act as a specific activating factor for CHSY1 in chondroitin polymerization. May facilitate PRKN transport into the mitochondria. In collaboration with PRKN, may enhance cell viability and protect cells from oxidative stress. This Homo sapiens (Human) protein is Chondroitin sulfate synthase 2.